The primary structure comprises 142 residues: Small heat shock protein IbpB (142 aa).

The sHSP domain maps to 26-137 (AGESQSFPPY…APQRIAISER (112 aa)).

The protein belongs to the small heat shock protein (HSP20) family. In terms of assembly, homodimer. Forms homomultimers of about 100-150 subunits at optimal growth temperatures. Conformation changes to oligomers at high temperatures or high ionic concentrations. The decrease in size of the multimers is accompanied by an increase in chaperone activity.

The protein localises to the cytoplasm. Its function is as follows. Associates with aggregated proteins, together with IbpA, to stabilize and protect them from irreversible denaturation and extensive proteolysis during heat shock and oxidative stress. Aggregated proteins bound to the IbpAB complex are more efficiently refolded and reactivated by the ATP-dependent chaperone systems ClpB and DnaK/DnaJ/GrpE. Its activity is ATP-independent. This is Small heat shock protein IbpB from Klebsiella pneumoniae (strain 342).